A 186-amino-acid chain; its full sequence is MDTETLKKNLQEKMEKALKVLDHELKGLRTGRASVNLLDSVIVEAYGSKIPLSQVASISTPDARTINVQVWDKSMVSLVEKGITIANLGLTPATDGQLIRLPIPILTEERRKELVKLAHKYGEDTKISLRNIRRDGNEELKKLEKNNILTKDEHHSLSEQVQKLTNDYSNKVDSAIKQKEQEIMTV.

The protein belongs to the RRF family.

Its subcellular location is the cytoplasm. In terms of biological role, responsible for the release of ribosomes from messenger RNA at the termination of protein biosynthesis. May increase the efficiency of translation by recycling ribosomes from one round of translation to another. The chain is Ribosome-recycling factor from Rickettsia canadensis (strain McKiel).